Here is a 466-residue protein sequence, read N- to C-terminus: Uronate isomerase (466 aa).

It belongs to the metallo-dependent hydrolases superfamily. Uronate isomerase family.

The catalysed reaction is D-glucuronate = D-fructuronate. It carries out the reaction aldehydo-D-galacturonate = keto-D-tagaturonate. The protein operates within carbohydrate metabolism; pentose and glucuronate interconversion. The sequence is that of Uronate isomerase (uxaC) from Brucella melitensis biotype 1 (strain ATCC 23456 / CCUG 17765 / NCTC 10094 / 16M).